The following is a 207-amino-acid chain: Ribonuclease HII (207 aa).

In terms of domain architecture, RNase H type-2 spans 18–207 (TYLSGSDEAG…PIKKISKETS (190 aa)). 3 residues coordinate a divalent metal cation: aspartate 24, glutamate 25, and aspartate 116.

Belongs to the RNase HII family. It depends on Mn(2+) as a cofactor. The cofactor is Mg(2+).

The protein localises to the cytoplasm. The catalysed reaction is Endonucleolytic cleavage to 5'-phosphomonoester.. Functionally, endonuclease that specifically degrades the RNA of RNA-DNA hybrids. The protein is Ribonuclease HII of Mycoplasma mycoides subsp. mycoides SC (strain CCUG 32753 / NCTC 10114 / PG1).